The sequence spans 360 residues: Peptide chain release factor 1 (360 aa).

Q235 carries the N5-methylglutamine modification.

The protein belongs to the prokaryotic/mitochondrial release factor family. Methylated by PrmC. Methylation increases the termination efficiency of RF1.

It is found in the cytoplasm. Its function is as follows. Peptide chain release factor 1 directs the termination of translation in response to the peptide chain termination codons UAG and UAA. The protein is Peptide chain release factor 1 of Burkholderia ambifaria (strain MC40-6).